The following is a 249-amino-acid chain: Adapter protein MecA (249 aa).

This sequence belongs to the MecA family. As to quaternary structure, homodimer.

Functionally, enables the recognition and targeting of unfolded and aggregated proteins to the ClpC protease or to other proteins involved in proteolysis. This chain is Adapter protein MecA, found in Streptococcus thermophilus (strain CNRZ 1066).